Here is a 178-residue protein sequence, read N- to C-terminus: C-phycoerythrin class 2 subunit beta (178 aa).

Phycourobilin-binding residues include Cys50 and Cys61. The (2R,3E)-phycoerythrobilin site is built by Cys82 and Cys159.

This sequence belongs to the phycobiliprotein family. As to quaternary structure, heterodimer of an alpha and a beta chain. Contains two covalently linked phycoerythrobilin chromophores and one covalently linked phycourobilin chromophore.

The protein localises to the cellular thylakoid membrane. Its function is as follows. Light-harvesting photosynthetic bile pigment-protein from the phycobiliprotein complex. The polypeptide is C-phycoerythrin class 2 subunit beta (mpeB) (Synechococcus sp. (strain WH8020)).